Here is a 147-residue protein sequence, read N- to C-terminus: Nucleoside diphosphate kinase (147 aa).

ATP is bound by residues Lys11, Phe59, Arg87, Thr93, Arg104, and Asn114. His117 functions as the Pros-phosphohistidine intermediate in the catalytic mechanism.

The protein belongs to the NDK family. As to quaternary structure, homotetramer. Requires Mg(2+) as cofactor.

It localises to the cytoplasm. The catalysed reaction is a 2'-deoxyribonucleoside 5'-diphosphate + ATP = a 2'-deoxyribonucleoside 5'-triphosphate + ADP. It catalyses the reaction a ribonucleoside 5'-diphosphate + ATP = a ribonucleoside 5'-triphosphate + ADP. Functionally, major role in the synthesis of nucleoside triphosphates other than ATP. The ATP gamma phosphate is transferred to the NDP beta phosphate via a ping-pong mechanism, using a phosphorylated active-site intermediate. In Anaeromyxobacter sp. (strain K), this protein is Nucleoside diphosphate kinase.